A 57-amino-acid chain; its full sequence is Large ribosomal subunit protein bL32 (57 aa).

The segment at 1 to 22 (MAVPKKKTSKSKRDKRRATWRH) is disordered.

It belongs to the bacterial ribosomal protein bL32 family.

This Nostoc punctiforme (strain ATCC 29133 / PCC 73102) protein is Large ribosomal subunit protein bL32.